The chain runs to 513 residues: Xylose import ATP-binding protein XylG (513 aa).

2 ABC transporter domains span residues 5–242 (LEMK…VGRE) and 259–505 (LRIE…LRSE). Position 37–44 (37–44 (GENGSGKS)) interacts with ATP.

Belongs to the ABC transporter superfamily. Xylose importer (TC 3.A.1.2.4) family. The complex is composed of two ATP-binding proteins (XylG), two transmembrane proteins (XylH) and a solute-binding protein (XylF).

Its subcellular location is the cell inner membrane. The enzyme catalyses D-xylose(out) + ATP + H2O = D-xylose(in) + ADP + phosphate + H(+). In terms of biological role, part of the ABC transporter complex XylFGH involved in xylose import. Responsible for energy coupling to the transport system. This Shigella flexneri serotype 5b (strain 8401) protein is Xylose import ATP-binding protein XylG.